The chain runs to 89 residues: Small ribosomal subunit protein uS17 (89 aa).

It belongs to the universal ribosomal protein uS17 family. In terms of assembly, part of the 30S ribosomal subunit.

Its function is as follows. One of the primary rRNA binding proteins, it binds specifically to the 5'-end of 16S ribosomal RNA. This chain is Small ribosomal subunit protein uS17, found in Baumannia cicadellinicola subsp. Homalodisca coagulata.